The sequence spans 477 residues: Trigger factor (477 aa).

The 86-residue stretch at E169 to L254 folds into the PPIase FKBP-type domain. The tract at residues V435–A477 is disordered. Over residues A454–K466 the composition is skewed to basic residues. The segment covering K467–A477 has biased composition (basic and acidic residues).

This sequence belongs to the FKBP-type PPIase family. Tig subfamily.

It is found in the cytoplasm. It carries out the reaction [protein]-peptidylproline (omega=180) = [protein]-peptidylproline (omega=0). In terms of biological role, involved in protein export. Acts as a chaperone by maintaining the newly synthesized protein in an open conformation. Functions as a peptidyl-prolyl cis-trans isomerase. The protein is Trigger factor of Brucella anthropi (strain ATCC 49188 / DSM 6882 / CCUG 24695 / JCM 21032 / LMG 3331 / NBRC 15819 / NCTC 12168 / Alc 37) (Ochrobactrum anthropi).